A 560-amino-acid chain; its full sequence is 2-hydroxyacyl-CoA lyase (560 aa).

Residue glutamate 49 coordinates thiamine diphosphate. Mg(2+) is bound by residues aspartate 446 and asparagine 473. The short motif at 558-560 is the Peroxisomal target signal 1 (PTS1) element; the sequence is PRL.

Belongs to the TPP enzyme family. The cofactor is Mg(2+). Thiamine diphosphate serves as cofactor.

The protein localises to the cytoplasm. The protein resides in the peroxisome matrix. The enzyme catalyses an (R)-2-hydroxy-long-chain-fatty acyl-CoA = a long-chain fatty aldehyde + formyl-CoA. It catalyses the reaction a 2-hydroxy-3-methyl fatty acyl-CoA = a 2-methyl-branched fatty aldehyde + formyl-CoA. In terms of biological role, catalyzes a carbon-carbon cleavage reaction; cleaves a 2-hydroxy-3-methylacyl-CoA into formyl-CoA and a 2-methyl-branched fatty aldehyde. The chain is 2-hydroxyacyl-CoA lyase from Saccharomyces cerevisiae (strain ATCC 204508 / S288c) (Baker's yeast).